Here is a 339-residue protein sequence, read N- to C-terminus: Nicotinate-nucleotide--dimethylbenzimidazole phosphoribosyltransferase (339 aa).

The active-site Proton acceptor is Glu306.

The protein belongs to the CobT family.

The catalysed reaction is 5,6-dimethylbenzimidazole + nicotinate beta-D-ribonucleotide = alpha-ribazole 5'-phosphate + nicotinate + H(+). Its pathway is nucleoside biosynthesis; alpha-ribazole biosynthesis; alpha-ribazole from 5,6-dimethylbenzimidazole: step 1/2. Its function is as follows. Catalyzes the synthesis of alpha-ribazole-5'-phosphate from nicotinate mononucleotide (NAMN) and 5,6-dimethylbenzimidazole (DMB). This is Nicotinate-nucleotide--dimethylbenzimidazole phosphoribosyltransferase from Brucella melitensis biotype 2 (strain ATCC 23457).